Here is a 345-residue protein sequence, read N- to C-terminus: Phosphoribosylformylglycinamidine cyclo-ligase (345 aa).

This sequence belongs to the AIR synthase family.

It is found in the cytoplasm. The catalysed reaction is 2-formamido-N(1)-(5-O-phospho-beta-D-ribosyl)acetamidine + ATP = 5-amino-1-(5-phospho-beta-D-ribosyl)imidazole + ADP + phosphate + H(+). It participates in purine metabolism; IMP biosynthesis via de novo pathway; 5-amino-1-(5-phospho-D-ribosyl)imidazole from N(2)-formyl-N(1)-(5-phospho-D-ribosyl)glycinamide: step 2/2. The sequence is that of Phosphoribosylformylglycinamidine cyclo-ligase from Lactobacillus acidophilus (strain ATCC 700396 / NCK56 / N2 / NCFM).